A 367-amino-acid polypeptide reads, in one-letter code: UDP-galactopyranose mutase (367 aa).

Residues Phe12, 31 to 32, Asn39, and 56 to 57 contribute to the FAD site; these read EK and HI. A UDP-alpha-D-galactose-binding site is contributed by Phe12. Residues Asn80, Thr152, Trp156, and Tyr181 each contribute to the UDP-alpha-D-galactose site. FAD is bound at residue 212-213; sequence DF. Positions 268, 278, and 311 each coordinate UDP-alpha-D-galactose. Arg340 provides a ligand contact to FAD. Tyr346 provides a ligand contact to UDP-alpha-D-galactose. Residue 347–352 participates in FAD binding; sequence YDMHQV.

In terms of assembly, homodimer. It depends on FAD as a cofactor.

It catalyses the reaction UDP-alpha-D-galactose = UDP-alpha-D-galactofuranose. Its pathway is bacterial outer membrane biogenesis; lipopolysaccharide biosynthesis. Catalyzes the interconversion through a 2-keto intermediate of uridine diphosphogalactopyranose (UDP-GalP) into uridine diphosphogalactofuranose (UDP-GalF). This Escherichia coli (strain K12) protein is UDP-galactopyranose mutase (glf).